Here is a 249-residue protein sequence, read N- to C-terminus: Bacillaene synthase decarboxylase PksI (249 aa).

The active site involves His230.

The protein belongs to the enoyl-CoA hydratase/isomerase family. Homotrimer. Does not form a heterotrimeric complex with PksH.

The protein resides in the cytoplasm. It participates in antibiotic biosynthesis; bacillaene biosynthesis. Involved in some intermediate steps for the synthesis of the antibiotic polyketide bacillaene which is involved in secondary metabolism. Catalyzes the decarboxylation of the 3-methylglutaconyl group tethered to PksL to a 3-methylcrotonyl moiety. The polypeptide is Bacillaene synthase decarboxylase PksI (pksI) (Bacillus subtilis (strain 168)).